Reading from the N-terminus, the 446-residue chain is NADP-specific glutamate dehydrogenase (446 aa).

Positions 92, 113, and 116 each coordinate substrate. Catalysis depends on K128, which acts as the Proton donor. G167 provides a ligand contact to substrate. NADP(+) contacts are provided by T211 and N242. S379 contributes to the substrate binding site.

It belongs to the Glu/Leu/Phe/Val dehydrogenases family. As to quaternary structure, homohexamer.

It carries out the reaction L-glutamate + NADP(+) + H2O = 2-oxoglutarate + NH4(+) + NADPH + H(+). In terms of biological role, catalyzes the reversible oxidative deamination of glutamate to a-ketoglutarate and ammonia. In Unknown prokaryotic organism, this protein is NADP-specific glutamate dehydrogenase (gdhA).